We begin with the raw amino-acid sequence, 711 residues long: Polyribonucleotide nucleotidyltransferase (711 aa).

Residues aspartate 486 and aspartate 492 each coordinate Mg(2+). Residues 553–612 (PRIHTIKINPDKIKDVIGKGGSVIRALTEETGTTIEIEDDGTVKIAATDGDKAQHAIRRI) form the KH domain. The region spanning 622–690 (GRIYNGKVTR…RQGRVRLSIK (69 aa)) is the S1 motif domain. The disordered stretch occupies residues 691–711 (EATEQTPSAAAPEAPVAEQGE). Residues 699 to 711 (AAAPEAPVAEQGE) show a composition bias toward low complexity.

This sequence belongs to the polyribonucleotide nucleotidyltransferase family. In terms of assembly, component of the RNA degradosome, which is a multiprotein complex involved in RNA processing and mRNA degradation. Requires Mg(2+) as cofactor.

It localises to the cytoplasm. It catalyses the reaction RNA(n+1) + phosphate = RNA(n) + a ribonucleoside 5'-diphosphate. Functionally, involved in mRNA degradation. Catalyzes the phosphorolysis of single-stranded polyribonucleotides processively in the 3'- to 5'-direction. The sequence is that of Polyribonucleotide nucleotidyltransferase from Klebsiella pneumoniae (strain 342).